A 339-amino-acid chain; its full sequence is MVIVKSWQKIFTLLVVLLLCIGCSKVPSTSYNPWAVVSLPTEAKLLDIAFTENPQHGFLVGSSATLLETNDGGNNWQPLNLALDDDRYRFDSVSFAGKEGWIVGEPSLLLHTTDEGRSWSRIPLSEKLPGNPIAIQALGTDIAEMATDVGAIYKTTDGGKNWKAQVEAAVGVVRNLERSVDGKYVAVSAKGSFYSTWEAGQNAWVPHNRNSSRRVENMGFSQDGLWLLARGGQVQFSDPANPDEWLDAETPELATSWGLLDMAYRTPNEVWIGGGSGNLLVSTDGGKTWEKDRDVEEVAANFYKVVFLKPDQGFVIGDRGVLLKYQPEAAKTATTEPAA.

Positions M1–G22 are cleaved as a signal peptide. Residue C23 is the site of N-palmitoyl cysteine attachment. The S-diacylglycerol cysteine moiety is linked to residue C23.

It belongs to the Ycf48 family. Part of early PSII assembly complexes which includes D1 (psbA) and PsbI; not found in mature PSII. Binds to the lumenal side of PSII complexes. Interacts with YidC.

Its subcellular location is the cellular thylakoid membrane. In terms of biological role, a factor required for optimal assembly of photosystem II (PSII), acting in the early stages of PSII assembly. Also plays a role in replacement of photodamaged D1 (psbA). Assists YidC in synthesis of chlorophyll-binding proteins. This chain is Photosystem II assembly lipoprotein Ycf48, found in Nostoc sp. (strain PCC 7120 / SAG 25.82 / UTEX 2576).